The sequence spans 248 residues: MAGHSKWANIKHKKAKEDAKRGKIFTKLIREITVAARLGGGDKDANPRLRAAIATALANNMSKDTIERAVVKGAGGDESANVEEVRYEGYGPGGVAIIVDCMTDNRNRTVGEVRHTFTKSGGNLGTDGSVAYMFTKRGIISFAPGVDEDALMEVALEAGAEDIITHEDGSIDVYTDPHDFSDIQEVLIEKGFNSENAEVTFDAETKAELDTETAEKVMALIDKLEDLDDVQSVYSNANFTQELIEQIG.

The protein belongs to the TACO1 family.

The protein resides in the cytoplasm. In Francisella tularensis subsp. tularensis (strain WY96-3418), this protein is Probable transcriptional regulatory protein FTW_1073.